The chain runs to 112 residues: Putative transmembrane protein ORF112 (112 aa).

3 helical membrane passes run 26 to 46, 50 to 70, and 80 to 100; these read FWEVICIYYFALQGSFLGILV, ILVTTLPLLPPALFFYLMYLF, and IFFPSLDPILIPILIFFLVGV.

It localises to the host membrane. The protein is Putative transmembrane protein ORF112 of Acidianus convivator (ABV).